The following is a 458-amino-acid chain: ATP synthase subunit beta (458 aa).

Position 148-155 (Gly-148–Thr-155) interacts with ATP.

The protein belongs to the ATPase alpha/beta chains family. In terms of assembly, F-type ATPases have 2 components, CF(1) - the catalytic core - and CF(0) - the membrane proton channel. CF(1) has five subunits: alpha(3), beta(3), gamma(1), delta(1), epsilon(1). CF(0) has three main subunits: a(1), b(2) and c(9-12). The alpha and beta chains form an alternating ring which encloses part of the gamma chain. CF(1) is attached to CF(0) by a central stalk formed by the gamma and epsilon chains, while a peripheral stalk is formed by the delta and b chains.

It is found in the cell inner membrane. It catalyses the reaction ATP + H2O + 4 H(+)(in) = ADP + phosphate + 5 H(+)(out). Produces ATP from ADP in the presence of a proton gradient across the membrane. The catalytic sites are hosted primarily by the beta subunits. This is ATP synthase subunit beta from Actinobacillus succinogenes (strain ATCC 55618 / DSM 22257 / CCUG 43843 / 130Z).